Consider the following 745-residue polypeptide: Aminopeptidase NAALADL1 (745 aa).

Topologically, residues 1–6 are cytoplasmic; sequence MHWVKI. A helical; Signal-anchor for type II membrane protein transmembrane segment spans residues 7–28; sequence LGVALGAAALLGLGIILGHFAI. The Extracellular portion of the chain corresponds to 29 to 745; sequence PKATSPLTSS…AATLVPVADL (717 aa). Residues Asn-128, Asn-141, and Asn-235 are each glycosylated (N-linked (GlcNAc...) asparagine). Residues Thr-263 and Leu-266 each coordinate Ca(2+). N-linked (GlcNAc...) asparagine glycans are attached at residues Asn-279, Asn-302, and Asn-329. Residues Cys-301 and Cys-318 are joined by a disulfide bond. Zn(2+)-binding residues include His-373 and Asp-383. Catalysis depends on Glu-421, which acts as the Proton donor/acceptor. Residue Glu-422 participates in Zn(2+) binding. Glu-430 and Glu-433 together coordinate Ca(2+). Asp-450 serves as a coordination point for Zn(2+). N-linked (GlcNAc...) asparagine glycosylation is found at Asn-456 and Asn-497. His-550 is a Zn(2+) binding site. N-linked (GlcNAc...) asparagine glycosylation is found at Asn-593 and Asn-620.

Belongs to the peptidase M28 family. M28B subfamily. In terms of assembly, homodimer. It depends on Zn(2+) as a cofactor. N-glycosylated.

Its subcellular location is the apical cell membrane. In terms of biological role, aminopeptidase with broad substrate specificity. Has lower activity with substrates that have Asp or Glu in the P2' position, or Pro in the P3' position. Lacks activity with substrates that have both Pro in the P3' position and Asp or Glu in the P2' position. Lacks carboxypeptidase activity. Lacks dipeptidyl-peptidase IV type activity. The chain is Aminopeptidase NAALADL1 (Naaladl1) from Mus musculus (Mouse).